The sequence spans 515 residues: Bifunctional purine biosynthesis protein PurH (515 aa).

The 145-residue stretch at Met-1–Val-145 folds into the MGS-like domain.

This sequence belongs to the PurH family.

The catalysed reaction is (6R)-10-formyltetrahydrofolate + 5-amino-1-(5-phospho-beta-D-ribosyl)imidazole-4-carboxamide = 5-formamido-1-(5-phospho-D-ribosyl)imidazole-4-carboxamide + (6S)-5,6,7,8-tetrahydrofolate. It carries out the reaction IMP + H2O = 5-formamido-1-(5-phospho-D-ribosyl)imidazole-4-carboxamide. It functions in the pathway purine metabolism; IMP biosynthesis via de novo pathway; 5-formamido-1-(5-phospho-D-ribosyl)imidazole-4-carboxamide from 5-amino-1-(5-phospho-D-ribosyl)imidazole-4-carboxamide (10-formyl THF route): step 1/1. Its pathway is purine metabolism; IMP biosynthesis via de novo pathway; IMP from 5-formamido-1-(5-phospho-D-ribosyl)imidazole-4-carboxamide: step 1/1. This chain is Bifunctional purine biosynthesis protein PurH, found in Streptococcus pyogenes serotype M18 (strain MGAS8232).